A 99-amino-acid chain; its full sequence is U1-theraphotoxin-Lsp1c (99 aa).

Positions 1–23 are cleaved as a signal peptide; that stretch reads MRKITIRALLLCSLLLVFHTSAA. A propeptide spanning residues 24–50 is cleaved from the precursor; that stretch reads AELQAQEGHLMIPGDTDTALETVDDER. Cystine bridges form between C54–C67, C58–C91, C72–C74, and C85–C96.

The protein belongs to the neurotoxin 12 (Hwtx-2) family. 04 (lasiotoxin) subfamily. As to expression, expressed by the venom gland.

It is found in the secreted. In terms of biological role, toxin that causes irreversible contractile paralysis into adult Aedes aegypti resulting in 100% mortality after 24 hours. This Lasiodora sp. (strain IBSP 8539) (Brazilian salmon pink birdeater) protein is U1-theraphotoxin-Lsp1c.